The chain runs to 346 residues: Selenocysteine Se-methyltransferase (346 aa).

Residues 13–330 (SMKELLKETG…TTIRAIHKRL (318 aa)) enclose the Hcy-binding domain. Cys-248, Cys-315, and Cys-316 together coordinate Zn(2+).

Zn(2+) is required as a cofactor. Expressed in roots, young leaves and florets, but not detected in plants not exposed to selenium.

The enzyme catalyses S-methyl-L-methionine + L-selenocysteine = Se-methyl-L-selenocysteine + L-methionine + H(+). Inhibited by L-methionine. Its function is as follows. Catalyzes the methylation of DL- and L-selenocysteine with S-methylmethionine as donor. Also methylates DL-homocysteine, DL- and L-cysteine in vitro. May be involved in selenium detoxification. The protein is Selenocysteine Se-methyltransferase (SMT) of Brassica oleracea var. italica (Broccoli).